We begin with the raw amino-acid sequence, 506 residues long: Glutamyl-tRNA(Gln) amidotransferase subunit A, mitochondrial (506 aa).

Active-site charge relay system residues include Lys-62 and Ser-141. Ser-165 acts as the Acyl-ester intermediate in catalysis.

This sequence belongs to the amidase family. GatA subfamily. In terms of assembly, subunit of the heterotrimeric GatCAB amidotransferase (AdT) complex, composed of A, B and C subunits.

It is found in the mitochondrion. The catalysed reaction is L-glutamyl-tRNA(Gln) + L-glutamine + ATP + H2O = L-glutaminyl-tRNA(Gln) + L-glutamate + ADP + phosphate + H(+). Functionally, allows the formation of correctly charged Gln-tRNA(Gln) through the transamidation of misacylated Glu-tRNA(Gln) in the mitochondria. The reaction takes place in the presence of glutamine and ATP through an activated gamma-phospho-Glu-tRNA(Gln). This Emericella nidulans (strain FGSC A4 / ATCC 38163 / CBS 112.46 / NRRL 194 / M139) (Aspergillus nidulans) protein is Glutamyl-tRNA(Gln) amidotransferase subunit A, mitochondrial.